We begin with the raw amino-acid sequence, 320 residues long: Tabersonine synthase (320 aa).

An Involved in the stabilization of the negatively charged intermediate by the formation of the oxyanion hole motif is present at residues 78 to 80 (HGA). Glycine 81 contacts (-)-tabersonine. The Proton acceptor role is filled by serine 170. Aspartate 266 is an active-site residue. Position 297 (tyrosine 297) interacts with (-)-tabersonine. The Proton donor/acceptor role is filled by tyrosine 297.

This sequence belongs to the 'GDXG' lipolytic enzyme family. Interacts with dehydroprecondylocarpine acetate synthase (DPAS). In terms of tissue distribution, expressed in leaf epidermis.

It is found in the cytoplasm. The protein resides in the cytosol. The protein localises to the nucleus. It carries out the reaction dehydrosecodine = (-)-tabersonine. The enzyme catalyses dihydroprecondylocarpine acetate = (-)-tabersonine + acetate + H(+). The protein operates within alkaloid biosynthesis. Component of iboga and aspidosperma monoterpenoid indole alkaloids (MIAs, e.g. tabersonine and catharanthine) biosynthesis pathway from 19E-geissoschizine, psychoactive compounds likely to be used in the treatment of opioid dependence. Catalyzes the conversion of dehydrosecodine to tabersonine, a precursor of vindoline; this process starts with the conversion of dihydroprecondylocarpine acetate to dehydrosecodine. This chain is Tabersonine synthase, found in Catharanthus roseus (Madagascar periwinkle).